The sequence spans 491 residues: Protein translocase subunit SecY (491 aa).

The Cytoplasmic segment spans residues 1-20; sequence MGWKEAAAPVLTRMPAVERP. Residues 21 to 47 form a helical membrane-spanning segment; sequence EGHVPFRRKMYWTGGVLVLYFFLTNVP. Residues 48 to 58 are Extracellular-facing; it reads LWGIQTAGNDF. The segment at residues 59–66 is an intramembrane region (helical); that stretch reads FGQFRSLL. Residues 59 to 87 form a discontinuously helical membrane-spanning segment; the sequence is FGQFRSLLAGGQGTVLQLGIGPIVTASIV. An intramembrane segment occupies 67–78; it reads AGGQGTVLQLGI. Positions 79–87 form an intramembrane region, helical; sequence GPIVTASIV. At 88-109 the chain is on the cytoplasmic side; that stretch reads LQLLGGANLLGLDTDNDPRDQA. Residues 110 to 134 form a helical membrane-spanning segment; that stretch reads IYQGLQKFLVGVMVVLTGAPMVFLG. At 135–152 the chain is on the extracellular side; it reads NFLQPSQQLAQSMPGGAF. The chain crosses the membrane as a helical span at residues 153-177; it reads GVEVLIFAQIAAGGILLLFMDEVIS. Over 178-183 the chain is Cytoplasmic; it reads KWGVGS. Residues 184-202 form a helical membrane-spanning segment; the sequence is GIGLFIVAGVSQSLVGGLV. The Extracellular portion of the chain corresponds to 203-244; it reads FWEGGVGSQGLLPTWFDIIVGNVSNMPPLLSGSGIEFLLMQA. A helical transmembrane segment spans residues 245–266; sequence GILGLLTTLFIYVVVVYAESVR. Residues 267 to 291 are Cytoplasmic-facing; it reads VEIPLSHARVKGARGRFPVKLIYAS. The helical transmembrane segment at 292 to 313 threads the bilayer; that stretch reads VLPMILVRALQANIQFLGQILN. Residues 314–365 lie on the Extracellular side of the membrane; it reads STLASMPTWLGVYGGNGQVTGGLFYYLAPIYSPNAWMWWTSGATAARWQVLI. The helical transmembrane segment at 366–385 threads the bilayer; the sequence is RIAIDLSFMIIGGAIFAIFW. Residues 386-428 lie on the Cytoplasmic side of the membrane; sequence VETADMGPDATARQIQNSGMQIPGFRKNQGVIEKVMERYIPQV. The helical transmembrane segment at 429 to 447 threads the bilayer; the sequence is TVIGGALVGLLAVMANMLG. Residues 448–452 are Extracellular-facing; sequence TIGNV. The chain crosses the membrane as a helical span at residues 453-467; it reads SGTGLLLTISITYKL. The Cytoplasmic portion of the chain corresponds to 468–491; the sequence is YEEIAEEQMMEMHPMMREMFGGGD.

This sequence belongs to the SecY/SEC61-alpha family. In terms of assembly, component of the Sec protein translocase complex. Heterotrimer consisting of alpha (SecY), beta (SecG) and gamma (SecE) subunits. The heterotrimers can form oligomers, although 1 heterotrimer is thought to be able to translocate proteins. Interacts with the ribosome. May interact with SecDF, and other proteins may be involved.

The protein resides in the cell membrane. Its function is as follows. The central subunit of the protein translocation channel SecYEG. Consists of two halves formed by TMs 1-5 and 6-10. These two domains form a lateral gate at the front which open onto the bilayer between TMs 2 and 7, and are clamped together by SecE at the back. The channel is closed by both a pore ring composed of hydrophobic SecY resides and a short helix (helix 2A) on the extracellular side of the membrane which forms a plug. The plug probably moves laterally to allow the channel to open. The ring and the pore may move independently. This chain is Protein translocase subunit SecY, found in Halobacterium salinarum (strain ATCC 700922 / JCM 11081 / NRC-1) (Halobacterium halobium).